Reading from the N-terminus, the 874-residue chain is MKSAEIREAFLRFFEEKGHTRVASSSLIPANDPTLLFTNAGMNQFKDCFLGLEKRAYTRATTSQKCVRAGGKHNDLENVGYTARHHTFFEMLGNFSFGDYFKRDAIHYAWEFLTGEKWLNLPKEKLWVTVYATDDEAYDIWTKEVGVPAERMVRIGDNKGAPYASDNFWAMGDTGPCGPCTEIFFDHGPDIWGGPPGSPEEDGDRYIEIWNNVFMQFNRTADGVMHPLPAPSVDTGMGLERVSAVLQHVHSNYEIDLFQNLLKASAEAIGCANDDAPSLKVVADHIRSCSFLIADGVLPSNEGRGYVLRRIIRRACRHGNKLGARGTFFHKIVAALVAEMGDAFPELKQQQAHIERVLKTEEEQFAKTLEQGLKILEQDLAELQGSVIPGNVVFKLYDTYGFPVDLTNDIARERELTIDEDGFEREMEAQRERARASSAFGMDYNSLVKVDGETRFLGYQGVSGAGQIVALFRDGQAVERLEEGEEGVVVLDQTPFYAESGGQVGDSGYLEAAGVRFDVRDTTKAGGAHLHHGVVAEGGLSVGAAVKAEVDASVRQATALNHSATHLLHAALRQVLGDHVQQKGSLVDSQRLRFDFSHFEAIKPEQLKALEDIVNAEIRRNTEVETEETDIDTAKAKGAMALFGEKYGDQVRVLSMGGDFSVELCGGTHVSRTGDIGLFKITSEGGVAAGVRRIEAVTGAAALAYLNGAEEQLKEAAGLVKGSRDNLLDKLGALLERNRSLEKELEQLKAKAASAAGDDLSAAAVDIKGAKVLAARLDGLDGKALLALVDQLKNKLGRAVILLGGELDGKVVLVAGVTQDLTGQLKAGELMKQAAAAVGGKGGGRPDMAQGGGTDAAKLDEALALAQRFVEQGL.

The Zn(2+) site is built by histidine 562, histidine 566, cysteine 665, and histidine 669.

This sequence belongs to the class-II aminoacyl-tRNA synthetase family. Requires Zn(2+) as cofactor.

It localises to the cytoplasm. It catalyses the reaction tRNA(Ala) + L-alanine + ATP = L-alanyl-tRNA(Ala) + AMP + diphosphate. In terms of biological role, catalyzes the attachment of alanine to tRNA(Ala) in a two-step reaction: alanine is first activated by ATP to form Ala-AMP and then transferred to the acceptor end of tRNA(Ala). Also edits incorrectly charged Ser-tRNA(Ala) and Gly-tRNA(Ala) via its editing domain. This Pseudomonas paraeruginosa (strain DSM 24068 / PA7) (Pseudomonas aeruginosa (strain PA7)) protein is Alanine--tRNA ligase.